The sequence spans 354 residues: Uroporphyrinogen decarboxylase (354 aa).

Substrate-binding positions include 27-31, aspartate 77, tyrosine 154, threonine 209, and histidine 327; that span reads RQAGR.

The protein belongs to the uroporphyrinogen decarboxylase family. Homodimer.

The protein resides in the cytoplasm. The enzyme catalyses uroporphyrinogen III + 4 H(+) = coproporphyrinogen III + 4 CO2. The protein operates within porphyrin-containing compound metabolism; protoporphyrin-IX biosynthesis; coproporphyrinogen-III from 5-aminolevulinate: step 4/4. Catalyzes the decarboxylation of four acetate groups of uroporphyrinogen-III to yield coproporphyrinogen-III. The sequence is that of Uroporphyrinogen decarboxylase from Hydrogenovibrio crunogenus (strain DSM 25203 / XCL-2) (Thiomicrospira crunogena).